The sequence spans 691 residues: Inactive TPR repeat-containing thioredoxin TTL3 (691 aa).

Disordered regions lie at residues 1-153 (MSHS…AVSP) and 174-209 (MASRTSSRTETLCTGTGNYGHGNVVRSGGGGGTSGK). Ser-8 carries the phosphoserine modification. Residues 19 to 39 (RFRDLQRNDDDVNKPDFRELD) are compositionally biased toward basic and acidic residues. Phosphoserine occurs at positions 42 and 45. The segment covering 51-79 (GSASSSAAATPTSSSGSSGSASGKPSVSS) has biased composition (low complexity). Basic and acidic residues predominate over residues 83 to 93 (KRLDDAYKSHS). 3 stretches are compositionally biased toward polar residues: residues 94–108 (GELSSPGSGMPTTTR), 118–140 (SSTGTPLIFSGSSFTSATSHTSP), and 175–189 (ASRTSSRTETLCTGT). TPR repeat units lie at residues 220 to 253 (PEELKRMGNDMYRRGSFSEALSLYDRAILISPGN), 255 to 287 (AYRSNRAAALTALRRLGEAVKECLEAVRIDPSY), 289 to 321 (RAHQRLASLYLRLGEAENARRHICFSGQCPDQA), 327 to 362 (QTLEKHLRRCWEARKIGDWKTAIKETDAAIANGADS), 412 to 445 (AYVLCIQAQVDMALGRFENAVVKAERAAMLDQTN), 458 to 491 (VVRARTRGNELFSSGRFSEACVAYGDGLKQDDSN), 492 to 525 (SVLYCNRAACWYKLGLWEKSVEDCNHALKSQPSY), and 527 to 559 (KALLRRAASYGKLGRWEDAVKDYEFLRRELPGD). In terms of domain architecture, Thioredoxin spans 596-683 (DKFKKSVALP…MVCPSHQFLE (88 aa)).

As to quaternary structure, interacts with BRL2. Expressed in embryos and organ primordia in shoot and root. In primary and cauline leaves and petals, is expressed in hydathodes, guard cells, petiole cells and cells associated with differentiating vascular bundles.

Involved in osmotic and salt stress tolerance. May play a role in the control of meristematic cell size during osmotic stress. May function as an adapter protein for BRL2 and may be required for signaling affecting leaf vascular tissue pattern formation. This Arabidopsis thaliana (Mouse-ear cress) protein is Inactive TPR repeat-containing thioredoxin TTL3.